The sequence spans 680 residues: Fermitin family homolog 2 (680 aa).

Positions 40-81 are interaction with membranes containing phosphatidylinositol phosphate; it reads HIGGVMLKLVEKLDVKKDWSDHALWWEKKRTWLLKTHWTLDK. The tract at residues 141 to 162 is disordered; sequence LKKPRDPTKKKKKKLDDQSEDE. 4 positions are modified to phosphoserine: Ser159, Ser181, Ser339, and Ser351. In terms of domain architecture, FERM spans 189 to 661; sequence MTPTYDAHDG…GYIFLSTRAK (473 aa). The PH domain occupies 380 to 476; the sequence is KVFKPKKLTL…WMAACRLASK (97 aa). Lys383 provides a ligand contact to a 1,2-diacyl-sn-glycero-3-phospho-(1D-myo-inositol-3,4,5-trisphosphate). Ser666 is modified (phosphoserine).

It belongs to the kindlin family. As to quaternary structure, interacts with ITGB1; the interaction is inhibited in presence of ITGB1BP1. Interacts with FBLIM1. Interacts with active, unphosphorylated CTNNB1. Identified in a complex with CTNNB1 and TCF7L2/TCF4. Interacts with ILK, ITGB1 and ITGB3. In terms of tissue distribution, detected in adult heart muscle (at protein level). Detected in heart, skeletal muscle and testis.

It is found in the cytoplasm. It localises to the cell cortex. Its subcellular location is the cytoskeleton. The protein localises to the stress fiber. The protein resides in the cell junction. It is found in the focal adhesion. It localises to the membrane. Its subcellular location is the cell projection. The protein localises to the lamellipodium membrane. The protein resides in the nucleus. It is found in the myofibril. It localises to the sarcomere. Its subcellular location is the i band. The protein localises to the cell surface. Its function is as follows. Scaffolding protein that enhances integrin activation mediated by TLN1 and/or TLN2, but activates integrins only weakly by itself. Binds to membranes enriched in phosphoinositides. Enhances integrin-mediated cell adhesion onto the extracellular matrix and cell spreading; this requires both its ability to interact with integrins and with phospholipid membranes. Required for the assembly of focal adhesions. Participates in the connection between extracellular matrix adhesion sites and the actin cytoskeleton and also in the orchestration of actin assembly and cell shape modulation. Recruits FBLIM1 to focal adhesions. Plays a role in the TGFB1 and integrin signaling pathways. Stabilizes active CTNNB1 and plays a role in the regulation of transcription mediated by CTNNB1 and TCF7L2/TCF4 and in Wnt signaling. This is Fermitin family homolog 2 (Fermt2) from Mus musculus (Mouse).